The sequence spans 274 residues: 2,3,4,5-tetrahydropyridine-2,6-dicarboxylate N-succinyltransferase (274 aa).

Residues arginine 104 and aspartate 141 each contribute to the substrate site.

This sequence belongs to the transferase hexapeptide repeat family. Homotrimer.

It is found in the cytoplasm. The catalysed reaction is (S)-2,3,4,5-tetrahydrodipicolinate + succinyl-CoA + H2O = (S)-2-succinylamino-6-oxoheptanedioate + CoA. It functions in the pathway amino-acid biosynthesis; L-lysine biosynthesis via DAP pathway; LL-2,6-diaminopimelate from (S)-tetrahydrodipicolinate (succinylase route): step 1/3. This is 2,3,4,5-tetrahydropyridine-2,6-dicarboxylate N-succinyltransferase from Shewanella denitrificans (strain OS217 / ATCC BAA-1090 / DSM 15013).